Reading from the N-terminus, the 650-residue chain is SUMO-activating enzyme subunit 2 (650 aa).

Residues Gly-25–Gly-30, Asp-49, Asn-57–Arg-60, Lys-73, Ser-96–Ile-97, and Asp-118–Arg-123 each bind ATP. Cys-159 and Cys-162 together coordinate Zn(2+). The active-site Glycyl thioester intermediate is Cys-174. Lys-191 participates in a covalent cross-link: Glycyl lysine isopeptide (Lys-Gly) (interchain with G-Cter in SUMO). Lys-237 is covalently cross-linked (Glycyl lysine isopeptide (Lys-Gly) (interchain with G-Cter in SUMO1)). Glycyl lysine isopeptide (Lys-Gly) (interchain with G-Cter in SUMO) cross-links involve residues Lys-258, Lys-282, and Lys-286. Positions 446 and 449 each coordinate Zn(2+). The disordered stretch occupies residues Asp-554–Asp-650. Polar residues predominate over residues Ala-572 to Lys-586. The span at Glu-590 to Pro-603 shows a compositional bias: acidic residues. Residue Ser-599 is modified to Phosphoserine. Residues Lys-618 and Lys-630 each participate in a glycyl lysine isopeptide (Lys-Gly) (interchain with G-Cter in SUMO) cross-link. Positions Pro-638 to Asp-650 are enriched in acidic residues.

Belongs to the ubiquitin-activating E1 family. As to quaternary structure, heterodimer of sae1 and uba2/sae2. The heterodimer corresponds to the two domains that are encoded on a single polypeptide chain in ubiquitin-activating enzyme E1. Interacts with ube2i. In terms of processing, sumoylated with SUMO1 and SUMO2/3 and by UBC9. Sumoylation at Lys-237 inhibits enzymatic activity. Sumoylation at the C-terminal lysine cluster plays an essential role in nuclear trafficking. Expressed in eye, brain and pectoral fins.

The protein resides in the cytoplasm. It localises to the nucleus. It functions in the pathway protein modification; protein sumoylation. Functionally, the heterodimer acts as an E1 ligase for sumo1, sumo2, and sumo3. It mediates ATP-dependent activation of sumo proteins followed by formation of a thioester bond between a sumo protein and a conserved active site cysteine residue on uba2/sae2. The polypeptide is SUMO-activating enzyme subunit 2 (uba2) (Danio rerio (Zebrafish)).